Consider the following 835-residue polypeptide: Protein translocase subunit SecA (835 aa).

Residues Q85, 103-107 (GEGKT), and D492 each bind ATP. The interval 788-807 (VQGEAVHPSSDGEEAKKKPV) is disordered. C819, C821, C830, and C831 together coordinate Zn(2+).

The protein belongs to the SecA family. Monomer and homodimer. Part of the essential Sec protein translocation apparatus which comprises SecA, SecYEG and auxiliary proteins SecDF. Other proteins may also be involved. It depends on Zn(2+) as a cofactor.

It is found in the cell membrane. It localises to the cytoplasm. It carries out the reaction ATP + H2O + cellular proteinSide 1 = ADP + phosphate + cellular proteinSide 2.. Its function is as follows. Part of the Sec protein translocase complex. Interacts with the SecYEG preprotein conducting channel. Has a central role in coupling the hydrolysis of ATP to the transfer of proteins into and across the cell membrane, serving as an ATP-driven molecular motor driving the stepwise translocation of polypeptide chains across the membrane. The sequence is that of Protein translocase subunit SecA from Bacillus cereus (strain ATCC 10987 / NRS 248).